The sequence spans 469 residues: 3-isopropylmalate dehydratase large subunit (469 aa).

[4Fe-4S] cluster contacts are provided by Cys347, Cys408, and Cys411.

Belongs to the aconitase/IPM isomerase family. LeuC type 1 subfamily. As to quaternary structure, heterodimer of LeuC and LeuD. The cofactor is [4Fe-4S] cluster.

The catalysed reaction is (2R,3S)-3-isopropylmalate = (2S)-2-isopropylmalate. It participates in amino-acid biosynthesis; L-leucine biosynthesis; L-leucine from 3-methyl-2-oxobutanoate: step 2/4. Its function is as follows. Catalyzes the isomerization between 2-isopropylmalate and 3-isopropylmalate, via the formation of 2-isopropylmaleate. The protein is 3-isopropylmalate dehydratase large subunit of Histophilus somni (strain 129Pt) (Haemophilus somnus).